We begin with the raw amino-acid sequence, 437 residues long: MALQNIGASNRNDAFYRYKMPKMVTKTEGKGNGIKTNIINNVEIAKALARPPSYTTKYFGCELGAQSKFDEKTGTSLVNGAHNTSKLAGLLENFIKKFVQCYGCGNPETEIIITKTQMVNLKCAACGFISEVDMRDKLTNFILKNPPEQKKVSKDKKAMRKAEKERLKEGELADEEQRKLKAKKKALSNGKDSKTSKNHSSDEDISPKHDENALEVDEDEDDDDGVEWQTDTSREAAEKRMMEQLSAKTAEMVMLSAMEVEEKKAPKSKSNGNVVKTENPPPQEKNLVQDMKEYLKKGSPISALKSFISSLSEPPQDIMDALFNALFDGVGKGFAKEVTKKKNYLAAAATMQEDGSQMHLLNSIGTFCGKNGNEEALKEVALVLKALYDQDIIEEEVVLDWYEKGLTGADKSSPVWKNVKPFVEWLQSAESESEEED.

A GTP-binding site is contributed by 29–36 (GKGNGIKT). Composition is skewed to basic and acidic residues over residues 148–179 (EQKK…EQRK) and 191–212 (KDSK…HDEN). Disordered stretches follow at residues 148 to 231 (EQKK…WQTD) and 262 to 284 (EKKA…PPQE). At Ser-201 the chain carries Phosphoserine; by CK2. Positions 213–226 (ALEVDEDEDDDDGV) are enriched in acidic residues. The residue at position 230 (Thr-230) is a Phosphothreonine; by CK2. The 159-residue stretch at 278 to 436 (ENPPPQEKNL…QSAESESEEE (159 aa)) folds into the W2 domain. Ser-428, Ser-431, and Ser-433 each carry phosphoserine; by CK2.

Belongs to the eIF-2-beta/eIF-5 family. Post-translationally, phosphorylated at Ser-201, Thr-230, Ser-428, Ser-431, and Ser-433 by CK2.

Its function is as follows. Catalyzes the hydrolysis of GTP bound to the 40S ribosomal initiation complex (40S.mRNA.Met-tRNA[F].eIF-2.GTP) with the subsequent joining of a 60S ribosomal subunit resulting in the release of eIF-2 and the guanine nucleotide. The subsequent joining of a 60S ribosomal subunit results in the formation of a functional 80S initiation complex (80S.mRNA.Met-tRNA[F]). This chain is Probable eukaryotic translation initiation factor 5-2, found in Arabidopsis thaliana (Mouse-ear cress).